The following is a 298-amino-acid chain: Putative cysteine protease YopT-like blr2058 (298 aa).

A compositionally biased stretch (basic and acidic residues) spans 1–14 (MYNRVDGEYAHTEQ). 2 disordered regions span residues 1 to 25 (MYNRVDGEYAHTEQAEESSWPADGS) and 59 to 80 (SDAIDDSSNTSGLSTSSLSSSS). Positions 65-80 (SSNTSGLSTSSLSSSS) are enriched in low complexity. The active site involves C109. Positions 137-162 (NHRSAARRQEQSEKLKTQLKEDKAEG) are enriched in basic and acidic residues. The tract at residues 137–166 (NHRSAARRQEQSEKLKTQLKEDKAEGSHNF) is disordered. Residues H223 and D238 contribute to the active site.

Belongs to the peptidase C58 family.

Functionally, potential cysteine protease, which may play a central role after invasion of host cell. The chain is Putative cysteine protease YopT-like blr2058 from Bradyrhizobium diazoefficiens (strain JCM 10833 / BCRC 13528 / IAM 13628 / NBRC 14792 / USDA 110).